The primary structure comprises 291 residues: uncharacterized protein (291 aa).

Disordered stretches follow at residues 1–62, 220–242, and 255–291; these read MELR…SSKK, PLPA…TDKV, and ENNK…SRKK. Residues 18 to 41 show a composition bias toward basic and acidic residues; that stretch reads EPAKNKSERSIESNERVGTREAKS. Polar residues-rich tracts occupy residues 42 to 58 and 226 to 236; these read ENTS…ATTD and PSLNLSPQKVP. Ser267 carries the post-translational modification Phosphoserine.

It is found in the cytoplasm. Its subcellular location is the nucleus. This is an uncharacterized protein from Saccharomyces cerevisiae (strain ATCC 204508 / S288c) (Baker's yeast).